The primary structure comprises 324 residues: MTIRAVVRGVGHYLPARVVENAEFEGKLDTTDEWIRSRTGIERRHFAAEGETTSQLAIKAAAAALADAGLSAADIDAIVVATSTPDFTFPSVATMVQAGLGNTNAFAFDVQAVCAGFVFALANANGMILSGQAKRVLVIGAETFSRIMDWADRGTCVLFGDGAGAVILEAAEGAGTAADRGILASDLHSDGRYRELLYVDGGVSTNGQSGHLRMQGNAVFKHAVQKLAETAHAALAKAGLTPEDVSWIVPHQANLRIITATAERMGVPMERVVVTVADHGNTSAASIPLALSTARARGQIKAGDLIVTEAIGGGLAWGSVVLRW.

Catalysis depends on residues Cys-114 and His-251. Positions 252-256 (QANLR) are ACP-binding. Residue Asn-281 is part of the active site.

Belongs to the thiolase-like superfamily. FabH family. As to quaternary structure, homodimer.

Its subcellular location is the cytoplasm. The catalysed reaction is malonyl-[ACP] + acetyl-CoA + H(+) = 3-oxobutanoyl-[ACP] + CO2 + CoA. Its pathway is lipid metabolism; fatty acid biosynthesis. Its function is as follows. Catalyzes the condensation reaction of fatty acid synthesis by the addition to an acyl acceptor of two carbons from malonyl-ACP. Catalyzes the first condensation reaction which initiates fatty acid synthesis and may therefore play a role in governing the total rate of fatty acid production. Possesses both acetoacetyl-ACP synthase and acetyl transacylase activities. Its substrate specificity determines the biosynthesis of branched-chain and/or straight-chain of fatty acids. In Rhodobacter capsulatus (Rhodopseudomonas capsulata), this protein is Beta-ketoacyl-[acyl-carrier-protein] synthase III.